The following is a 242-amino-acid chain: Sensory transduction protein LytT (242 aa).

In terms of domain architecture, Response regulatory spans 2–116; that stretch reads HVLIVDDEPL…KITQVIEKAS (115 aa). The region spanning 137–241 is the HTH LytTR-type domain; sequence IPIQGEDRIY…VKEFKEKLGL (105 aa).

Phosphorylated by LytS.

The protein resides in the cytoplasm. Its function is as follows. Member of the two-component regulatory system LytS/LytT that probably regulates genes involved in cell wall metabolism. In Enterococcus faecalis (strain ATCC 700802 / V583), this protein is Sensory transduction protein LytT (lytT).